The following is a 334-amino-acid chain: MGMKKNRPRRGSLAFSPRKRAKKLVPKIRSWPADKKVGLQAFPVYKAGTTHALLIENNPKSPNNGQEVFTPVTVLETPDVTVAGIRLYEKTTKGLKALTEVWAEQLDGDLGRKLTLAKKEEKKTADALDAVVEKATEVRAIVHTNPKTTGIPKKKPEVVEIRIGGSSVAERLAYAKEILGKTLAIGDVFEAGEIIDTLAITKGKGFQGSVKRWGIKVQFGKHQRKGVGRHTGSIGPWRPRRVMWTVPLPGQMGFHQRTEYNKRILKLGSEGAEITPKGGFLNYGAVKNGYVVVKGTVQGPAKRLVVLRGSVRAAEDKFGLPEVAYISTESKQGN.

A compositionally biased stretch (basic residues) spans 1–10; that stretch reads MGMKKNRPRR. Residues 1–21 are disordered; sequence MGMKKNRPRRGSLAFSPRKRA.

Belongs to the universal ribosomal protein uL3 family. In terms of assembly, part of the 50S ribosomal subunit. Forms a cluster with proteins L14 and L24e.

In terms of biological role, one of the primary rRNA binding proteins, it binds directly near the 3'-end of the 23S rRNA, where it nucleates assembly of the 50S subunit. The polypeptide is Large ribosomal subunit protein uL3 (Methanococcus maripaludis (strain C5 / ATCC BAA-1333)).